The following is a 78-amino-acid chain: UPF0369 protein RF_1112 (78 aa).

The protein belongs to the SDHAF4 family.

The chain is UPF0369 protein RF_1112 from Rickettsia felis (strain ATCC VR-1525 / URRWXCal2) (Rickettsia azadi).